A 309-amino-acid polypeptide reads, in one-letter code: Ribonuclease H2 subunit B (309 aa).

A2 is subject to N-acetylalanine. The residue at position 295 (K295) is an N6-acetyllysine. Phosphoserine is present on S296.

This sequence belongs to the RNase H2 subunit B family. The RNase H2 complex is a heterotrimer composed of the catalytic subunit RNASEH2A and the non-catalytic subunits RNASEH2B and RNASEH2C.

It localises to the nucleus. In terms of biological role, non catalytic subunit of RNase H2, an endonuclease that specifically degrades the RNA of RNA:DNA hybrids. Participates in DNA replication, possibly by mediating the removal of lagging-strand Okazaki fragment RNA primers during DNA replication. Mediates the excision of single ribonucleotides from DNA:RNA duplexes. This chain is Ribonuclease H2 subunit B (RNASEH2B), found in Bos taurus (Bovine).